We begin with the raw amino-acid sequence, 935 residues long: Protein HIRA (935 aa).

WD repeat units lie at residues 14–58 (HDTG…DKKK), 72–111 (ESQS…NSMG), 131–170 (GHSM…DRIT), 174–213 (DIQL…CVKS), 222–261 (IEET…QTWK), 277–320 (RAMP…KPLF), and 325–362 (IFNH…IGEM). Residues 431-556 (SSDIQLTKSM…RNKKRKVPAT (126 aa)) are disordered. Over residues 439-468 (SMEDNSKENESKNSEKTMMEERNKQIDVRK) the composition is skewed to basic and acidic residues. Residues 480–492 (GTTTADPMTSLSS) are compositionally biased toward polar residues. A compositionally biased stretch (acidic residues) spans 520-542 (DLEDSSDSDDDDEEEEEDMEISD).

Belongs to the WD repeat HIR1 family.

It localises to the nucleus. Functionally, required for replication-independent chromatin assembly and for the periodic repression of histone gene transcription during the cell cycle. The chain is Protein HIRA from Caenorhabditis elegans.